The primary structure comprises 339 residues: Ketol-acid reductoisomerase (NADP(+)) (339 aa).

Positions 1-182 constitute a KARI N-terminal Rossmann domain; it reads MRVYYDRDAD…GGGRAGIIET (182 aa). NADP(+) is bound by residues 24–27, Arg48, Ser51, Ser53, and 83–86; these read YGSQ and DELQ. The active site involves His108. Gly134 serves as a coordination point for NADP(+). A KARI C-terminal knotted domain is found at 183–328; it reads TFREECETDL…AKLRDMMPWI (146 aa). Asp191, Glu195, Glu227, and Glu231 together coordinate Mg(2+). Ser252 contacts substrate.

The protein belongs to the ketol-acid reductoisomerase family. Mg(2+) is required as a cofactor.

The enzyme catalyses (2R)-2,3-dihydroxy-3-methylbutanoate + NADP(+) = (2S)-2-acetolactate + NADPH + H(+). It carries out the reaction (2R,3R)-2,3-dihydroxy-3-methylpentanoate + NADP(+) = (S)-2-ethyl-2-hydroxy-3-oxobutanoate + NADPH + H(+). Its pathway is amino-acid biosynthesis; L-isoleucine biosynthesis; L-isoleucine from 2-oxobutanoate: step 2/4. The protein operates within amino-acid biosynthesis; L-valine biosynthesis; L-valine from pyruvate: step 2/4. In terms of biological role, involved in the biosynthesis of branched-chain amino acids (BCAA). Catalyzes an alkyl-migration followed by a ketol-acid reduction of (S)-2-acetolactate (S2AL) to yield (R)-2,3-dihydroxy-isovalerate. In the isomerase reaction, S2AL is rearranged via a Mg-dependent methyl migration to produce 3-hydroxy-3-methyl-2-ketobutyrate (HMKB). In the reductase reaction, this 2-ketoacid undergoes a metal-dependent reduction by NADPH to yield (R)-2,3-dihydroxy-isovalerate. The polypeptide is Ketol-acid reductoisomerase (NADP(+)) (Nitrobacter hamburgensis (strain DSM 10229 / NCIMB 13809 / X14)).